A 386-amino-acid chain; its full sequence is Circumsporozoite protein (386 aa).

Positions 1–22 are cleaved as a signal peptide; the sequence is MKNFILLAVSSILLVDLFPTHC. Positions 51–304 are disordered; the sequence is HVGQSASRGR…NEGANAPNEK (254 aa). Residues 72-100 show a composition bias toward basic and acidic residues; that stretch reads DAKKKKDGKKAEPKNPRENKLKQPGDRAD. Positions 80–88 are required for the binding to heparan sulfate proteoglycans (HSPGs) on the surface of host hepatocytes; the sequence is KKAEPKNPR. A region I; contains the proteolytic cleavage site region spans residues 91–95; it reads KLKQP. Repeat copies occupy residues 96 to 104, 105 to 113, 114 to 122, 123 to 131, 132 to 140, 141 to 149, 150 to 158, 159 to 167, 168 to 176, 177 to 185, 186 to 194, 195 to 203, 204 to 212, 213 to 221, 222 to 230, 231 to 239, 240 to 248, 249 to 257, 258 to 266, and 267 to 275. A 20 X 9 AA tandem repeats of G-D-R-A-[AD]-G-Q-P-A region spans residues 96 to 275; that stretch reads GDRADGQPAG…AGDRAAGQPA (180 aa). Over residues 275-292 the composition is skewed to gly residues; that stretch reads AGNGAGGQAAGGNAGGQG. The span at 293–303 shows a compositional bias: low complexity; that stretch reads QNNEGANAPNE. A TSP type-1 domain is found at 312-364; the sequence is KVRATVGTEWTPCSVTCGVGVRVRRRVNAANKKPEDLTLNDLETDVCTMDKCA. 2 disulfides stabilise this stretch: Cys-324/Cys-358 and Cys-328/Cys-363. O-linked (Fuc) threonine glycosylation occurs at Thr-327. Cys-363 carries GPI-anchor amidated cysteine lipidation. A propeptide spans 364–386 (removed in mature form); sequence AGIFNVVSNSLGLVILLVLALFN.

It belongs to the plasmodium circumsporozoite protein family. During host cell invasion, proteolytically cleaved at the cell membrane in the region I by a papain-like cysteine protease of parasite origin. Cleavage is triggered by the sporozoite contact with highly sulfated heparan sulfate proteoglycans (HSPGs) present on the host hepatocyte cell surface. Cleavage exposes the TSP type-1 (TSR) domain and is required for productive invasion of host hepatocytes but not for adhesion to the host cell membrane. Cleavage is dispensable for sporozoite development in the oocyst, motility and for traversal of host and vector cells. Post-translationally, O-glycosylated; maybe by POFUT2.

It localises to the cell membrane. The protein localises to the cytoplasm. Functionally, essential sporozoite protein. In the mosquito vector, required for sporozoite development in the oocyst, migration through the vector hemolymph and entry into the vector salivary glands. In the vertebrate host, required for sporozoite migration through the host dermis and infection of host hepatocytes. Binds to highly sulfated heparan sulfate proteoglycans (HSPGs) on the surface of host hepatocytes. In terms of biological role, in the vertebrate host, binds to highly sulfated heparan sulfate proteoglycans (HSPGs) on the surface of host hepatocytes and is required for sporozoite invasion of the host hepatocytes. The chain is Circumsporozoite protein from Plasmodium simium.